The primary structure comprises 43 residues: Myotoxin-1 (43 aa).

Intrachain disulfides connect C4/C36, C11/C30, and C18/C37.

This sequence belongs to the crotamine-myotoxin family. In terms of assembly, monomer. Expressed by the venom gland.

The protein resides in the secreted. In terms of biological role, cationic peptide that possesses multiple functions. It acts as a cell-penetrating peptide (CPP), and as a potent voltage-gated potassium channel (Kv) inhibitor. It exhibits antimicrobial activities, hind limb paralysis, and severe muscle necrosis by a non-enzymatic mechanism. The polypeptide is Myotoxin-1 (Crotalus concolor (Midget faded rattlesnake)).